The primary structure comprises 394 residues: Subtilisin-like protease CPC735_005570 (394 aa).

The signal sequence occupies residues 1–21 (MRAIISVALFLSLSLLSAVNA). The propeptide occupies 22–114 (AEILSAGDTD…IEHDRIANAR (93 aa)). One can recognise an Inhibitor I9 domain in the interval 37–110 (SYIVVMRDGL…AVKYIEHDRI (74 aa)). In terms of domain architecture, Peptidase S8 spans 123 to 394 (GWNLARISHK…RLLLYNGSGR (272 aa)). Residues Asp155 and His186 each act as charge relay system in the active site. N-linked (GlcNAc...) asparagine glycosylation is found at Asn216 and Asn247. Ser340 functions as the Charge relay system in the catalytic mechanism. N-linked (GlcNAc...) asparagine glycans are attached at residues Asn382 and Asn390.

It belongs to the peptidase S8 family.

The protein resides in the secreted. Secreted subtilisin-like serine protease with keratinolytic activity that contributes to pathogenicity. In Coccidioides posadasii (strain C735) (Valley fever fungus), this protein is Subtilisin-like protease CPC735_005570.